We begin with the raw amino-acid sequence, 853 residues long: DNA mismatch repair protein MutS (853 aa).

613-620 (GPNMGGKS) contacts ATP.

This sequence belongs to the DNA mismatch repair MutS family.

In terms of biological role, this protein is involved in the repair of mismatches in DNA. It is possible that it carries out the mismatch recognition step. This protein has a weak ATPase activity. The sequence is that of DNA mismatch repair protein MutS from Vibrio parahaemolyticus serotype O3:K6 (strain RIMD 2210633).